A 52-amino-acid polypeptide reads, in one-letter code: Phospholamban (52 aa).

Residue methionine 1 is modified to N-acetylmethionine. The Cytoplasmic portion of the chain corresponds to 1 to 31 (MEKVQYLTRSAIRRASTIEMPQQARQKLQNL). Position 16 is a phosphoserine; by PKA and DMPK (serine 16). The tract at residues 16–22 (STIEMPQ) is involved in HAX1 binding. Position 17 is a phosphothreonine; by CaMK2 (threonine 17). Residues 32–52 (FINFCLILICLLLICIIVMLL) form a helical membrane-spanning segment. Cysteine 36 carries S-palmitoyl cysteine lipidation.

It belongs to the phospholamban family. Homopentamer. Can also form heterooligomers with other sarcoplasmic/endoplasmic reticulum calcium ATPase (SERCA) regulators ARLN, ERLN, SLN and STRIT1/DWORF. Monomer. Interacts with HAX1. Interacts as a monomer with ATP2A2; the interaction decreases ATP2A2 Ca(2+) affinity. Interacts with VMP1; VMP1 competes with PLN and SLN to prevent them from forming an inhibitory complex with ATP2A2. Interacts with S100A1 in a Ca(2+)-dependent manner. Post-translationally, phosphorylation by PKA abolishes the inhibition of ATP2A2-mediated calcium uptake. Phosphorylated at Thr-17 by CaMK2, and in response to beta-adrenergic stimulation. Phosphorylation by DMPK may stimulate sarcoplasmic reticulum calcium uptake in cardiomyocytes. Palmitoylated by ZDHHC16, promoting formation of the homopentamer. In terms of processing, in elongated spermatids, proteolytically cleaved by SPPL2C which modulates intracellular Ca(2+) homeostasis. In terms of tissue distribution, heart muscle (at protein level).

The protein resides in the endoplasmic reticulum membrane. Its subcellular location is the sarcoplasmic reticulum membrane. The protein localises to the mitochondrion membrane. It is found in the membrane. Functionally, reversibly inhibits the activity of ATP2A2/SERCA2 in cardiac sarcoplasmic reticulum by decreasing the apparent affinity of the ATPase for Ca(2+). Binds preferentially to the ATP-bound E1 conformational form of ATP2A2 which predominates at low Ca(2+) concentrations during the diastolic phase of the cardiac cycle. Inhibits ATP2A2 Ca(2+) affinity by disrupting its allosteric activation by ATP. Modulates the contractility of the heart muscle in response to physiological stimuli via its effects on ATP2A2. Modulates calcium re-uptake during muscle relaxation and plays an important role in calcium homeostasis in the heart muscle. The degree of ATP2A2 inhibition depends on the oligomeric state of PLN. ATP2A2 inhibition is alleviated by PLN phosphorylation. Also inhibits the activity of ATP2A3/SERCA3. Controls intracellular Ca(2+) levels in elongated spermatids and may play a role in germ cell differentiation. In the thalamic reticular nucleus of the brain, plays a role in the regulation of sleep patterns and executive functioning. The protein is Phospholamban of Homo sapiens (Human).